A 292-amino-acid chain; its full sequence is Small ribosomal subunit protein uS2 (292 aa).

Residues 230 to 292 (RSGGAPGSEK…KKEAGSGEEA (63 aa)) are disordered. 2 stretches are compositionally biased toward basic and acidic residues: residues 247–259 (EWER…KTEA) and 271–292 (PAKE…GEEA).

Belongs to the universal ribosomal protein uS2 family.

The sequence is that of Small ribosomal subunit protein uS2 from Thermobifida fusca (strain YX).